A 127-amino-acid chain; its full sequence is Probable 4-amino-4-deoxy-L-arabinose-phosphoundecaprenol flippase subunit ArnF (127 aa).

A helical transmembrane segment spans residues M1–M21. The Periplasmic segment spans residues K22–A48. Residues V49–L69 form a helical membrane-spanning segment. Residues R70–A77 are Cytoplasmic-facing. The helical transmembrane segment at Y78–L98 threads the bilayer. Residues H99–P101 lie on the Periplasmic side of the membrane. The helical transmembrane segment at F102–L122 threads the bilayer. Topologically, residues P123–S127 are cytoplasmic.

Belongs to the ArnF family. Heterodimer of ArnE and ArnF.

The protein localises to the cell inner membrane. It functions in the pathway bacterial outer membrane biogenesis; lipopolysaccharide biosynthesis. In terms of biological role, translocates 4-amino-4-deoxy-L-arabinose-phosphoundecaprenol (alpha-L-Ara4N-phosphoundecaprenol) from the cytoplasmic to the periplasmic side of the inner membrane. This chain is Probable 4-amino-4-deoxy-L-arabinose-phosphoundecaprenol flippase subunit ArnF, found in Enterobacter sp. (strain 638).